The following is a 114-amino-acid chain: T cell receptor beta variable 9 (114 aa).

Positions Met-1 to Ser-21 are cleaved as a signal peptide. The 93-residue stretch at Gly-22–Val-114 folds into the Ig-like domain. An intrachain disulfide couples Cys-42 to Cys-110. An N-linked (GlcNAc...) asparagine glycan is attached at Asn-96.

As to quaternary structure, alpha-beta TR is a heterodimer composed of an alpha and beta chain; disulfide-linked. The alpha-beta TR is associated with the transmembrane signaling CD3 coreceptor proteins to form the TR-CD3 (TcR or TCR). The assembly of alpha-beta TR heterodimers with CD3 occurs in the endoplasmic reticulum where a single alpha-beta TR heterodimer associates with one CD3D-CD3E heterodimer, one CD3G-CD3E heterodimer and one CD247 homodimer forming a stable octameric structure. CD3D-CD3E and CD3G-CD3E heterodimers preferentially associate with TR alpha and TR beta chains, respectively. The association of the CD247 homodimer is the last step of TcR assembly in the endoplasmic reticulum and is required for transport to the cell surface.

The protein resides in the cell membrane. Functionally, v region of the variable domain of T cell receptor (TR) beta chain that participates in the antigen recognition. Alpha-beta T cell receptors are antigen specific receptors which are essential to the immune response and are present on the cell surface of T lymphocytes. Recognize peptide-major histocompatibility (MH) (pMH) complexes that are displayed by antigen presenting cells (APC), a prerequisite for efficient T cell adaptive immunity against pathogens. Binding of alpha-beta TR to pMH complex initiates TR-CD3 clustering on the cell surface and intracellular activation of LCK that phosphorylates the ITAM motifs of CD3G, CD3D, CD3E and CD247 enabling the recruitment of ZAP70. In turn ZAP70 phosphorylates LAT, which recruits numerous signaling molecules to form the LAT signalosome. The LAT signalosome propagates signal branching to three major signaling pathways, the calcium, the mitogen-activated protein kinase (MAPK) kinase and the nuclear factor NF-kappa-B (NF-kB) pathways, leading to the mobilization of transcription factors that are critical for gene expression and essential for T cell growth and differentiation. The T cell repertoire is generated in the thymus, by V-(D)-J rearrangement. This repertoire is then shaped by intrathymic selection events to generate a peripheral T cell pool of self-MH restricted, non-autoaggressive T cells. Post-thymic interaction of alpha-beta TR with the pMH complexes shapes TR structural and functional avidity. The chain is T cell receptor beta variable 9 from Homo sapiens (Human).